The following is a 327-amino-acid chain: MKKLTLLETELAIKYIKDLFQNALSKELNLLRVSAPLIIAPDSGLNDNLNGWEAPVSFKSKTNGVSSQVVQSLAKWKRYSIARYEIPLYQGLYTDMNAIRMDETLDATHSMYVDQWDWELRISENDRNVEFLKNTVNKIYKVLKEAQLKVNEKYGIFEQKDLLPEHIHFVTTQELLDQYPDKNPSEREQLVCEKYKAVFVMQVGKKLSNNQVHDGRSPDYDDWSLNGDIMVYNPRSKKALELSSMGIRVNKEVLLKQLEESKQNERLELMFHKKLVNGELHQTIGGGIGQSRLCYFLLQKDHIGEVQASHWSDEIVVEAKAKGIKLL.

This sequence belongs to the class-II aminoacyl-tRNA synthetase family. AsnA subfamily.

The protein resides in the cytoplasm. The catalysed reaction is L-aspartate + NH4(+) + ATP = L-asparagine + AMP + diphosphate + H(+). Its pathway is amino-acid biosynthesis; L-asparagine biosynthesis; L-asparagine from L-aspartate (ammonia route): step 1/1. This Mycoplasmoides gallisepticum (strain R(low / passage 15 / clone 2)) (Mycoplasma gallisepticum) protein is Aspartate--ammonia ligase.